A 507-amino-acid chain; its full sequence is Subtilisin-like protease 1 (507 aa).

The signal sequence occupies residues M1–A19. Positions A20–N116 are excised as a propeptide. In terms of domain architecture, Inhibitor I9 spans S34–I113. The Peptidase S8 domain occupies S126–K400. Residues D158 and H190 each act as charge relay system in the active site. The interval G175–M198 is disordered. N251 carries N-linked (GlcNAc...) asparagine glycosylation. Residues N282–S294 are compositionally biased toward polar residues. The interval N282–S312 is disordered. The active-site Charge relay system is S345. Residues S378–I394 are compositionally biased toward polar residues. Positions S378 to D486 are disordered. 2 stretches are compositionally biased toward pro residues: residues K405 to P428 and E438 to P449. Low complexity predominate over residues F450–P461. Pro residues predominate over residues A462–P476.

The protein belongs to the peptidase S8 family.

Its subcellular location is the secreted. Secreted subtilisin-like serine protease with keratinolytic activity that contributes to pathogenicity. The sequence is that of Subtilisin-like protease 1 (SUB1) from Trichophyton equinum (Horse ringworm fungus).